The sequence spans 436 residues: UDP-N-acetylglucosamine 1-carboxyvinyltransferase 1 (436 aa).

22–23 (KN) provides a ligand contact to phosphoenolpyruvate. Residue arginine 93 participates in UDP-N-acetyl-alpha-D-glucosamine binding. The active-site Proton donor is the cysteine 117. Residue cysteine 117 is modified to 2-(S-cysteinyl)pyruvic acid O-phosphothioketal. UDP-N-acetyl-alpha-D-glucosamine contacts are provided by residues 122–126 (RPIDQ), aspartate 306, and valine 328.

The protein belongs to the EPSP synthase family. MurA subfamily.

It is found in the cytoplasm. The catalysed reaction is phosphoenolpyruvate + UDP-N-acetyl-alpha-D-glucosamine = UDP-N-acetyl-3-O-(1-carboxyvinyl)-alpha-D-glucosamine + phosphate. It functions in the pathway cell wall biogenesis; peptidoglycan biosynthesis. Cell wall formation. Adds enolpyruvyl to UDP-N-acetylglucosamine. This Bacillus licheniformis (strain ATCC 14580 / DSM 13 / JCM 2505 / CCUG 7422 / NBRC 12200 / NCIMB 9375 / NCTC 10341 / NRRL NRS-1264 / Gibson 46) protein is UDP-N-acetylglucosamine 1-carboxyvinyltransferase 1.